The chain runs to 337 residues: 5-dehydro-2-deoxygluconokinase (337 aa).

This sequence belongs to the carbohydrate kinase PfkB family.

It catalyses the reaction 5-dehydro-2-deoxy-D-gluconate + ATP = 6-phospho-5-dehydro-2-deoxy-D-gluconate + ADP + H(+). Its pathway is polyol metabolism; myo-inositol degradation into acetyl-CoA; acetyl-CoA from myo-inositol: step 5/7. Its function is as follows. Catalyzes the phosphorylation of 5-dehydro-2-deoxy-D-gluconate (2-deoxy-5-keto-D-gluconate or DKG) to 6-phospho-5-dehydro-2-deoxy-D-gluconate (DKGP). The protein is 5-dehydro-2-deoxygluconokinase of Geobacillus thermodenitrificans (strain NG80-2).